Consider the following 277-residue polypeptide: MELIEKHASFGGWQNVYRHYSQSLKCEMNVGVYLPPKAENEKLPVLYWLSGLTCNEQNFITKSGMQRYAAEHNIIVVAPDTSPRGSHVADADRYDLGQGAGFYLNATQAPWNEHYKMYDYIRNELPNLVMHHFPATARKSISGHSMGGLGALVLALRNPDEYVSVSAFSPIVSPSQVPWGQQAFAAYLGENKDAWLDYDPVSLISQGQRVAEIMVDQGLSDDFYAEQLRTPNLEKICQEMNIKTLIRYHEGYDHSYYFVSSFIGEHIAYHANKLNMR.

Residues serine 145, aspartate 221, and histidine 254 each act as charge relay system in the active site.

This sequence belongs to the esterase D family.

It carries out the reaction S-formylglutathione + H2O = formate + glutathione + H(+). Functionally, serine hydrolase involved in the detoxification of formaldehyde. Hydrolyzes S-formylglutathione to glutathione and formate. In Escherichia coli O1:K1 / APEC, this protein is S-formylglutathione hydrolase FrmB (frmB).